A 421-amino-acid polypeptide reads, in one-letter code: 4-hydroxy-3-methylbut-2-en-1-yl diphosphate synthase (flavodoxin) (421 aa).

[4Fe-4S] cluster-binding residues include Cys298, Cys301, Cys344, and Glu351.

Belongs to the IspG family. The cofactor is [4Fe-4S] cluster.

It catalyses the reaction (2E)-4-hydroxy-3-methylbut-2-enyl diphosphate + oxidized [flavodoxin] + H2O + 2 H(+) = 2-C-methyl-D-erythritol 2,4-cyclic diphosphate + reduced [flavodoxin]. The protein operates within isoprenoid biosynthesis; isopentenyl diphosphate biosynthesis via DXP pathway; isopentenyl diphosphate from 1-deoxy-D-xylulose 5-phosphate: step 5/6. Functionally, converts 2C-methyl-D-erythritol 2,4-cyclodiphosphate (ME-2,4cPP) into 1-hydroxy-2-methyl-2-(E)-butenyl 4-diphosphate. The polypeptide is 4-hydroxy-3-methylbut-2-en-1-yl diphosphate synthase (flavodoxin) (Neisseria meningitidis serogroup B (strain ATCC BAA-335 / MC58)).